Consider the following 681-residue polypeptide: Translation factor GUF1 homolog, chloroplastic (681 aa).

Residues 1–51 (MAMASAMDLSSPPTFFLSGTSTSSPSLRRLSSISVSGFRRHSNRKLQILCQ) constitute a chloroplast transit peptide. The tr-type G domain maps to 84 to 265 (SNIRNFSIIA…AIVQRIPAPL (182 aa)). GTP-binding positions include 93–100 (AHIDHGKS), 158–162 (DTPGH), and 212–215 (NKID).

It belongs to the TRAFAC class translation factor GTPase superfamily. Classic translation factor GTPase family. LepA subfamily.

It is found in the plastid. The protein resides in the chloroplast. The enzyme catalyses GTP + H2O = GDP + phosphate + H(+). Functionally, promotes chloroplast protein synthesis. May act as a fidelity factor of the translation reaction, by catalyzing a one-codon backward translocation of tRNAs on improperly translocated ribosomes. This chain is Translation factor GUF1 homolog, chloroplastic, found in Arabidopsis thaliana (Mouse-ear cress).